We begin with the raw amino-acid sequence, 320 residues long: Dipeptide transport system permease protein DppC (320 aa).

A run of 6 helical transmembrane segments spans residues 56–76 (LAMA…IGPF), 121–141 (LFVG…YGGV), 154–176 (MRII…MVLM), 230–252 (LLPN…AIFA), 267–287 (FASW…GHWW), and 289–309 (LFFP…LGDG). One can recognise an ABC transmembrane type-1 domain in the interval 117-307 (ARISLFVGVM…LTMYAFNVLG (191 aa)).

This sequence belongs to the binding-protein-dependent transport system permease family. OppBC subfamily.

It is found in the cell membrane. In terms of biological role, probably part of the ABC transporter DppBCDE involved in dipeptide transport. Responsible for the translocation of the substrate across the membrane. The protein is Dipeptide transport system permease protein DppC (dppC) of Bacillus subtilis (strain 168).